We begin with the raw amino-acid sequence, 202 residues long: Small ribosomal subunit protein uS4 (202 aa).

Residues 23 to 42 are disordered; the sequence is RKAARRSYPPGQHGQARRKR. The S4 RNA-binding domain occupies 90 to 154; the sequence is MRLDNLVFRL…SRKLVTANLE (65 aa).

Belongs to the universal ribosomal protein uS4 family. In terms of assembly, part of the 30S ribosomal subunit. Contacts protein S5. The interaction surface between S4 and S5 is involved in control of translational fidelity.

One of the primary rRNA binding proteins, it binds directly to 16S rRNA where it nucleates assembly of the body of the 30S subunit. Its function is as follows. With S5 and S12 plays an important role in translational accuracy. The polypeptide is Small ribosomal subunit protein uS4 (Synechococcus elongatus (strain ATCC 33912 / PCC 7942 / FACHB-805) (Anacystis nidulans R2)).